Here is a 224-residue protein sequence, read N- to C-terminus: Ribonuclease T (224 aa).

The 175-residue stretch at 20–194 folds into the Exonuclease domain; sequence VVIDVETAGF…YDTERTAELF (175 aa). Residues aspartate 23, glutamate 25, histidine 181, and aspartate 186 each contribute to the Mg(2+) site. Histidine 181 functions as the Proton donor/acceptor in the catalytic mechanism.

Belongs to the RNase T family. In terms of assembly, homodimer. Mg(2+) serves as cofactor.

Functionally, trims short 3' overhangs of a variety of RNA species, leaving a one or two nucleotide 3' overhang. Responsible for the end-turnover of tRNA: specifically removes the terminal AMP residue from uncharged tRNA (tRNA-C-C-A). Also appears to be involved in tRNA biosynthesis. This chain is Ribonuclease T, found in Shewanella putrefaciens (strain CN-32 / ATCC BAA-453).